The chain runs to 195 residues: Penicillin-binding protein activator LpoB (195 aa).

Positions 1–16 are cleaved as a signal peptide; the sequence is MKKRALIVLAALVLAS. Cysteine 17 carries N-palmitoyl cysteine lipidation. Cysteine 17 carries S-diacylglycerol cysteine lipidation. Residues 19–51 form a disordered region; the sequence is SRKPASPPAPIEPVPPPVTVSVQPPPPATSEPV. Over residues 23-51 the composition is skewed to pro residues; it reads ASPPAPIEPVPPPVTVSVQPPPPATSEPV.

It belongs to the LpoB family. As to quaternary structure, interacts with PBP1b.

It is found in the cell outer membrane. Regulator of peptidoglycan synthesis that is essential for the function of penicillin-binding protein 1B (PBP1b). This Sodalis glossinidius (strain morsitans) protein is Penicillin-binding protein activator LpoB.